Here is a 393-residue protein sequence, read N- to C-terminus: Acetylornithine aminotransferase 1 (393 aa).

Residue R131 participates in N(2)-acetyl-L-ornithine binding. 215–218 (DEVQ) serves as a coordination point for pyridoxal 5'-phosphate. An N6-(pyridoxal phosphate)lysine modification is found at K244. T272 lines the N(2)-acetyl-L-ornithine pocket. Residue T273 participates in pyridoxal 5'-phosphate binding.

This sequence belongs to the class-III pyridoxal-phosphate-dependent aminotransferase family. ArgD subfamily. Homodimer. The cofactor is pyridoxal 5'-phosphate.

The protein localises to the cytoplasm. It carries out the reaction N(2)-acetyl-L-ornithine + 2-oxoglutarate = N-acetyl-L-glutamate 5-semialdehyde + L-glutamate. The protein operates within amino-acid biosynthesis; L-arginine biosynthesis; N(2)-acetyl-L-ornithine from L-glutamate: step 4/4. This Bordetella pertussis (strain Tohama I / ATCC BAA-589 / NCTC 13251) protein is Acetylornithine aminotransferase 1.